The chain runs to 201 residues: Recombination protein RecR (201 aa).

The C4-type zinc finger occupies 60–75 (CSCCGNVDTIDPCTVC). Residues 83 to 178 (AVIIVVEDVA…RITRLAHGVP (96 aa)) form the Toprim domain.

It belongs to the RecR family.

Functionally, may play a role in DNA repair. It seems to be involved in an RecBC-independent recombinational process of DNA repair. It may act with RecF and RecO. This Rhizobium meliloti (strain 1021) (Ensifer meliloti) protein is Recombination protein RecR.